The following is a 347-amino-acid chain: Dehydratase asqC (347 aa).

Residues 1-18 (MRPAILAAFSTLPAAAKA) form the signal peptide. N-linked (GlcNAc...) asparagine glycosylation is found at asparagine 51, asparagine 103, asparagine 131, asparagine 143, asparagine 215, asparagine 264, and asparagine 281.

It catalyses the reaction [(1'E)-5'-(3',3'-dimethyloxiran-2'-yl)-3'-hydroxy-3'-methylpent-1'-en-1'-yl]-quinolinone B = (1'E,3'E)-5-(3,3-dimethyloxiran-2-yl)-3-methylhexa-1,3-dienyl-quinolinone B + H2O. It functions in the pathway secondary metabolite biosynthesis. It participates in alkaloid biosynthesis. The protein operates within mycotoxin biosynthesis. Functionally, dehydratase; part of the gene cluster that mediates the biosynthesis of the aspoquinolone mycotoxins. Within the pathway, the dehydratase asqC catalyzes the dehydratation of the epoxide at C-3 to produce (1'E,3'E)-5-(3,3-dimethyloxiran-2-yl)-3-methylhexa-1,3-dienyl-quinolinone B. The first step of the pathway is catalyzed by the nonribosomal peptide synthetase asqK that condenses anthranilic acid and O-methyl-L-tyrosine to produce 4'-methoxycyclopeptin. 4'-methoxycyclopeptin is then converted to 4'-methoxydehydrocyclopeptin by the ketoglutarate-dependent dioxygenase asqJ. AsqJ also converts its first product 4'-methoxydehydrocyclopeptin to 4'-methoxycyclopenin. The following conversion of 4'-methoxycyclopenin into 4'-methoxyviridicatin is catalyzed by the cyclopenase asqI. 4'-methoxyviridicatin is the precursor of quinolone natural products, and is further converted to quinolinone B. The prenyltransferase asqH1 then catalyzes the canonical Friedel-Crafts alkylation of quinolinone B with dimethylallyl cation to yield dimethylallyl quinolone, which is subjected to FAD-dependent dehydrogenation by the FAD-linked oxidoreductase asqF to yield conjugated aryl diene. The delta(3') double bond then serves as the site of the second alkylation with DMAPP catalyzed by the prenyltransferase asqH2 to yield a carbenium ion intermediate, which can be attacked by H(2)O to yield a styrenyl quinolone containing a C3'-hydroxyprenyl chain. The FAD-dependent monooxygenase asqG performs epoxidation of the terminal C7'-C8' olefin. Finally, after dehydratation of the epoxide at C3 by asqC, the quinolone epoxide rearrangement protein asqO catalyzes an enzymatic 3-exo-tet cyclization to yield the cyclopropyl-THF ring system in aspoquinolone. This Emericella nidulans (strain FGSC A4 / ATCC 38163 / CBS 112.46 / NRRL 194 / M139) (Aspergillus nidulans) protein is Dehydratase asqC.